We begin with the raw amino-acid sequence, 27 residues long: Agglutinin alpha chain (27 aa).

Positions 1–27 constitute a Jacalin-type lectin domain; the sequence is GKAFDDGAFTGIREINLSINKETAIGD.

Belongs to the jacalin lectin family. As to quaternary structure, tetramer of four alpha chains associated with two or four beta chains. In terms of processing, N-glycosylated.

In terms of biological role, D-galactose-specific lectin, binds the T-antigen structure Gal-beta1,3-GalNAc (Thomsen-Friedenreich-antigen-specific lectin). Potent and selective stimulant of distinct T- and B-cell functions. Shows a unique ability to specifically recognize IgA-1 from human serum. In Artocarpus tonkinensis, this protein is Agglutinin alpha chain.